Reading from the N-terminus, the 123-residue chain is ATP synthase epsilon chain (123 aa).

This sequence belongs to the ATPase epsilon chain family. F-type ATPases have 2 components, CF(1) - the catalytic core - and CF(0) - the membrane proton channel. CF(1) has five subunits: alpha(3), beta(3), gamma(1), delta(1), epsilon(1). CF(0) has three main subunits: a, b and c.

It is found in the cell membrane. Its function is as follows. Produces ATP from ADP in the presence of a proton gradient across the membrane. In Corynebacterium diphtheriae (strain ATCC 700971 / NCTC 13129 / Biotype gravis), this protein is ATP synthase epsilon chain.